We begin with the raw amino-acid sequence, 928 residues long: DNA-binding protein RFX6 (928 aa).

2 disordered regions span residues 1 to 22 (MAKV…QVSP) and 53 to 102 (PGGA…AADL). Over residues 92–101 (SHDSKTKAAD) the composition is skewed to basic and acidic residues. The RFX-type winged-helix DNA-binding region spans 124–199 (TLQWLEENYI…YHYYGIGIKE (76 aa)).

This sequence belongs to the RFX family. Interacts with RFX3.

The protein resides in the nucleus. Functionally, transcription factor required to direct islet cell differentiation during endocrine pancreas development. Specifically required for the differentiation of 4 of the 5 islet cell types and for the production of insulin. Not required for pancreatic PP (polypeptide-producing) cells differentiation. Acts downstream of NEUROG3 and regulates the transcription factors involved in beta-cell maturation and function, thereby restricting the expression of the beta-cell differentiation and specification genes, and thus the beta-cell fate choice. Activates transcription by forming a heterodimer with RFX3 and binding to the X-box in the promoter of target genes. Involved in glucose-stimulated insulin secretion by promoting insulin and L-type calcium channel gene transcription. The chain is DNA-binding protein RFX6 (RFX6) from Ailuropoda melanoleuca (Giant panda).